Consider the following 272-residue polypeptide: Shikimate dehydrogenase (NADP(+)) (272 aa).

Residues 14-16 (SKS) and Thr-61 contribute to the shikimate site. The Proton acceptor role is filled by Lys-65. NADP(+) is bound at residue Glu-77. Positions 86 and 102 each coordinate shikimate. Residues 126–130 (GAGGA), 149–154 (NRTVSR), and Met-213 each bind NADP(+). Shikimate is bound at residue Tyr-215. Residue Gly-237 participates in NADP(+) binding.

The protein belongs to the shikimate dehydrogenase family. Homodimer.

The enzyme catalyses shikimate + NADP(+) = 3-dehydroshikimate + NADPH + H(+). The protein operates within metabolic intermediate biosynthesis; chorismate biosynthesis; chorismate from D-erythrose 4-phosphate and phosphoenolpyruvate: step 4/7. Its function is as follows. Involved in the biosynthesis of the chorismate, which leads to the biosynthesis of aromatic amino acids. Catalyzes the reversible NADPH linked reduction of 3-dehydroshikimate (DHSA) to yield shikimate (SA). The polypeptide is Shikimate dehydrogenase (NADP(+)) (Escherichia coli (strain K12 / MC4100 / BW2952)).